We begin with the raw amino-acid sequence, 326 residues long: Undecaprenyl-phosphate 4-deoxy-4-formamido-L-arabinose transferase (326 aa).

2 consecutive transmembrane segments (helical) span residues L234 to I254 and V269 to L289.

This sequence belongs to the glycosyltransferase 2 family.

It is found in the cell inner membrane. It catalyses the reaction UDP-4-deoxy-4-formamido-beta-L-arabinose + di-trans,octa-cis-undecaprenyl phosphate = 4-deoxy-4-formamido-alpha-L-arabinopyranosyl di-trans,octa-cis-undecaprenyl phosphate + UDP. The protein operates within glycolipid biosynthesis; 4-amino-4-deoxy-alpha-L-arabinose undecaprenyl phosphate biosynthesis; 4-amino-4-deoxy-alpha-L-arabinose undecaprenyl phosphate from UDP-4-deoxy-4-formamido-beta-L-arabinose and undecaprenyl phosphate: step 1/2. It functions in the pathway bacterial outer membrane biogenesis; lipopolysaccharide biosynthesis. Its function is as follows. Catalyzes the transfer of 4-deoxy-4-formamido-L-arabinose from UDP to undecaprenyl phosphate. The modified arabinose is attached to lipid A and is required for resistance to polymyxin and cationic antimicrobial peptides. This is Undecaprenyl-phosphate 4-deoxy-4-formamido-L-arabinose transferase from Aeromonas hydrophila subsp. hydrophila (strain ATCC 7966 / DSM 30187 / BCRC 13018 / CCUG 14551 / JCM 1027 / KCTC 2358 / NCIMB 9240 / NCTC 8049).